The sequence spans 453 residues: Bifunctional protein GlmU (453 aa).

The pyrophosphorylase stretch occupies residues 1-231 (MERTCLAVIL…EIEMTGCNNR (231 aa)). UDP-N-acetyl-alpha-D-glucosamine-binding positions include 10–13 (LAAG), Lys-24, Gln-77, 82–83 (GT), 105–107 (YGD), Gly-143, Glu-157, Asn-172, and Asn-229. Residue Asp-107 coordinates Mg(2+). Asn-229 serves as a coordination point for Mg(2+). The segment at 232-252 (AELAVIERFWQERRRREMMLA) is linker. Residues 253-453 (GVTMIAPETV…AIKAAKRAKA (201 aa)) are N-acetyltransferase. Arg-318 and Lys-336 together coordinate UDP-N-acetyl-alpha-D-glucosamine. The Proton acceptor role is filled by His-348. UDP-N-acetyl-alpha-D-glucosamine-binding residues include Tyr-351 and Asn-362. Acetyl-CoA-binding positions include Ala-365, 371 to 372 (NY), Ser-390, Ser-408, and Arg-425.

It in the N-terminal section; belongs to the N-acetylglucosamine-1-phosphate uridyltransferase family. The protein in the C-terminal section; belongs to the transferase hexapeptide repeat family. In terms of assembly, homotrimer. The cofactor is Mg(2+).

It localises to the cytoplasm. It catalyses the reaction alpha-D-glucosamine 1-phosphate + acetyl-CoA = N-acetyl-alpha-D-glucosamine 1-phosphate + CoA + H(+). The enzyme catalyses N-acetyl-alpha-D-glucosamine 1-phosphate + UTP + H(+) = UDP-N-acetyl-alpha-D-glucosamine + diphosphate. It participates in nucleotide-sugar biosynthesis; UDP-N-acetyl-alpha-D-glucosamine biosynthesis; N-acetyl-alpha-D-glucosamine 1-phosphate from alpha-D-glucosamine 6-phosphate (route II): step 2/2. It functions in the pathway nucleotide-sugar biosynthesis; UDP-N-acetyl-alpha-D-glucosamine biosynthesis; UDP-N-acetyl-alpha-D-glucosamine from N-acetyl-alpha-D-glucosamine 1-phosphate: step 1/1. Its pathway is bacterial outer membrane biogenesis; LPS lipid A biosynthesis. Its function is as follows. Catalyzes the last two sequential reactions in the de novo biosynthetic pathway for UDP-N-acetylglucosamine (UDP-GlcNAc). The C-terminal domain catalyzes the transfer of acetyl group from acetyl coenzyme A to glucosamine-1-phosphate (GlcN-1-P) to produce N-acetylglucosamine-1-phosphate (GlcNAc-1-P), which is converted into UDP-GlcNAc by the transfer of uridine 5-monophosphate (from uridine 5-triphosphate), a reaction catalyzed by the N-terminal domain. The chain is Bifunctional protein GlmU from Rhizobium etli (strain CIAT 652).